Here is a 172-residue protein sequence, read N- to C-terminus: Acetolactate synthase small subunit (172 aa).

Residues 4–79 (IITLTVVNRS…DVLKVTDITN (76 aa)) form the ACT domain.

It belongs to the acetolactate synthase small subunit family. In terms of assembly, dimer of large and small chains.

It carries out the reaction 2 pyruvate + H(+) = (2S)-2-acetolactate + CO2. It functions in the pathway amino-acid biosynthesis; L-isoleucine biosynthesis; L-isoleucine from 2-oxobutanoate: step 1/4. It participates in amino-acid biosynthesis; L-valine biosynthesis; L-valine from pyruvate: step 1/4. The polypeptide is Acetolactate synthase small subunit (ilvH) (Bacillus subtilis (strain 168)).